A 543-amino-acid chain; its full sequence is Glucose-6-phosphate isomerase (543 aa).

Glu351 (proton donor) is an active-site residue. Active-site residues include His382 and Lys511.

It belongs to the GPI family.

The protein localises to the cytoplasm. It carries out the reaction alpha-D-glucose 6-phosphate = beta-D-fructose 6-phosphate. It functions in the pathway carbohydrate biosynthesis; gluconeogenesis. It participates in carbohydrate degradation; glycolysis; D-glyceraldehyde 3-phosphate and glycerone phosphate from D-glucose: step 2/4. Catalyzes the reversible isomerization of glucose-6-phosphate to fructose-6-phosphate. The polypeptide is Glucose-6-phosphate isomerase (Hydrogenovibrio crunogenus (strain DSM 25203 / XCL-2) (Thiomicrospira crunogena)).